We begin with the raw amino-acid sequence, 114 residues long: Large ribosomal subunit protein uL22 (114 aa).

The protein belongs to the universal ribosomal protein uL22 family. As to quaternary structure, part of the 50S ribosomal subunit.

Its function is as follows. This protein binds specifically to 23S rRNA; its binding is stimulated by other ribosomal proteins, e.g. L4, L17, and L20. It is important during the early stages of 50S assembly. It makes multiple contacts with different domains of the 23S rRNA in the assembled 50S subunit and ribosome. Functionally, the globular domain of the protein is located near the polypeptide exit tunnel on the outside of the subunit, while an extended beta-hairpin is found that lines the wall of the exit tunnel in the center of the 70S ribosome. This chain is Large ribosomal subunit protein uL22, found in Streptococcus pneumoniae (strain Taiwan19F-14).